We begin with the raw amino-acid sequence, 232 residues long: Protein INAPERTURATE POLLEN 1 homolog (232 aa).

In terms of assembly, interacts with LECRKS7/DAF1.

The protein resides in the cytoplasm. Functionally, required for pollen aperture formation, male fertility and LECRKS7/DAF1 function. Seems to be involved in operculum protrusion. Participates in the modification of plasma membrane at future aperture sites, possibly by creating close contact between the plasma membrane and callose wall to prevent primexine formation and sporopollenin deposition. This Oryza sativa subsp. japonica (Rice) protein is Protein INAPERTURATE POLLEN 1 homolog.